Consider the following 100-residue polypeptide: Protein RnfH (100 aa).

The protein belongs to the UPF0125 (RnfH) family.

The chain is Protein RnfH from Pseudomonas paraeruginosa (strain DSM 24068 / PA7) (Pseudomonas aeruginosa (strain PA7)).